The primary structure comprises 280 residues: Tryptophan synthase alpha chain (280 aa).

Residues E49 and D60 each act as proton acceptor in the active site.

It belongs to the TrpA family. In terms of assembly, tetramer of two alpha and two beta chains.

The catalysed reaction is (1S,2R)-1-C-(indol-3-yl)glycerol 3-phosphate + L-serine = D-glyceraldehyde 3-phosphate + L-tryptophan + H2O. Its pathway is amino-acid biosynthesis; L-tryptophan biosynthesis; L-tryptophan from chorismate: step 5/5. Functionally, the alpha subunit is responsible for the aldol cleavage of indoleglycerol phosphate to indole and glyceraldehyde 3-phosphate. This is Tryptophan synthase alpha chain from Corynebacterium efficiens (strain DSM 44549 / YS-314 / AJ 12310 / JCM 11189 / NBRC 100395).